Reading from the N-terminus, the 400-residue chain is Acetylornithine aminotransferase (400 aa).

Pyridoxal 5'-phosphate is bound by residues 113–114 and Phe139; that span reads GA. Residue Arg142 coordinates N(2)-acetyl-L-ornithine. 224–227 contributes to the pyridoxal 5'-phosphate binding site; it reads DEVQ. Lys253 is modified (N6-(pyridoxal phosphate)lysine). Ser281 contributes to the N(2)-acetyl-L-ornithine binding site. Residue Thr282 participates in pyridoxal 5'-phosphate binding.

Belongs to the class-III pyridoxal-phosphate-dependent aminotransferase family. ArgD subfamily. In terms of assembly, homodimer. The cofactor is pyridoxal 5'-phosphate.

Its subcellular location is the cytoplasm. It carries out the reaction N(2)-acetyl-L-ornithine + 2-oxoglutarate = N-acetyl-L-glutamate 5-semialdehyde + L-glutamate. It participates in amino-acid biosynthesis; L-arginine biosynthesis; N(2)-acetyl-L-ornithine from L-glutamate: step 4/4. This chain is Acetylornithine aminotransferase, found in Mycobacterium bovis (strain ATCC BAA-935 / AF2122/97).